Reading from the N-terminus, the 2596-residue chain is Protein unc-79 homolog (2596 aa).

Residues serine 754 and serine 758 each carry the phosphoserine modification. Disordered regions lie at residues 907 to 931 (GPEG…TVPS), 1539 to 1573 (SQRQ…GFQE), 1594 to 1632 (VDSP…DSDS), 1648 to 1679 (EEEE…SVLS), 1695 to 1832 (KDFS…FKIQ), and 1863 to 1909 (LGEQ…KQIQ). Residues 1594 to 1606 (VDSPGKPAPREDL) show a composition bias toward basic and acidic residues. Low complexity predominate over residues 1662-1679 (GNNAASSPSIPSQPSVLS). A compositionally biased stretch (polar residues) spans 1704-1713 (NHQSASNEDS). The span at 1726 to 1735 (ELSKSEELRE) shows a compositional bias: basic and acidic residues. Polar residues predominate over residues 1897–1908 (ETSSHSSISKQI). The next 2 membrane-spanning stretches (helical) occupy residues 2184–2204 (LLSF…ELCG) and 2426–2446 (CVLH…WTVY).

Belongs to the unc-79 family. In terms of assembly, NALCN complex consists of NALCN and auxiliary subunits, UNC79, UNC80 and NACL1. These auxiliary subunits are essential for the NALCN channel function. UNC80 bridges NALCN to UNC79. Interacts with NALCN. Interacts with UNC80.

The protein resides in the cell membrane. Its function is as follows. Auxiliary subunit of the NALCN sodium channel complex. The NALCN sodium channel complex is a voltage-gated ion channel responsible for the resting Na(+) permeability that controls neuronal excitability. Activated by neuropeptides substance P, neurotensin, and extracellular calcium that regulates neuronal excitability by controlling the sizes of NALCN-dependent sodium-leak current. This chain is Protein unc-79 homolog (Unc79), found in Mus musculus (Mouse).